A 303-amino-acid chain; its full sequence is Epimerase family protein YfhF (303 aa).

Belongs to the NAD(P)-dependent epimerase/dehydratase family. SDR39U1 subfamily.

This is Epimerase family protein YfhF (yfhF) from Bacillus subtilis (strain 168).